Reading from the N-terminus, the 426-residue chain is Na(+)/H(+) antiporter 1 (426 aa).

A run of 12 helical transmembrane segments spans residues 1 to 21, 29 to 49, 57 to 77, 95 to 115, 120 to 140, 158 to 178, 184 to 204, 208 to 228, 236 to 256, 286 to 306, 309 to 329, and 382 to 402; these read MELMMAIGYLGLALVLGSLVA, IPDIPLLLLLGLIIGPFLQII, IFEYAGPIGLIFILLGGAFTM, ITFLITLLISGFIFNMVLNLP, VGYLFGAITAATDPATLIPVF, IFNDPLGIVSTSVILGLFGLF, LIDLITLAGGAIVVGLLLAKI, IIIHCDFHEYVAPLVLGGAML, LLPSICGYGFSGYMAVAIMGL, VFIFVFLGACIKLSMLENYFI, LLVALGSIFLARPLGVFLGLI, and IAGTIIIGTFMTILLSVILEA.

The protein belongs to the monovalent cation:proton antiporter 1 (CPA1) transporter (TC 2.A.36) family.

Its subcellular location is the cell membrane. Functionally, this is a Na(+)/H(+) antiporter. Can also transport lithium. This Methanocaldococcus jannaschii (strain ATCC 43067 / DSM 2661 / JAL-1 / JCM 10045 / NBRC 100440) (Methanococcus jannaschii) protein is Na(+)/H(+) antiporter 1.